An 86-amino-acid polypeptide reads, in one-letter code: Kappa-theraphotoxin-Cg1c (86 aa).

The first 21 residues, 1–21, serve as a signal peptide directing secretion; the sequence is MKVSVLITLAVLGVMFVWASA. The propeptide occupies 22-50; that stretch reads AELEERGSDHRDSPAWLKSMERIFQSEER. Cystine bridges form between Cys-52/Cys-66, Cys-59/Cys-71, and Cys-65/Cys-78.

The protein belongs to the neurotoxin 10 (Hwtx-1) family. 28 (Jztx-11) subfamily. Expressed by the venom gland.

The protein resides in the secreted. In terms of biological role, probable ion channel inhibitor. In Chilobrachys guangxiensis (Chinese earth tiger tarantula), this protein is Kappa-theraphotoxin-Cg1c.